The primary structure comprises 145 residues: Hemoglobin fetal subunit beta (145 aa).

The region spanning 1 to 145 (MLSAEEKAAV…VANALAHRYH (145 aa)) is the Globin domain. The heme b site is built by His-62 and His-91.

It belongs to the globin family. Heterotetramer of two alpha chains and two beta chains. Red blood cells.

In terms of biological role, involved in oxygen transport from the lung to the various peripheral tissues. The polypeptide is Hemoglobin fetal subunit beta (Bos taurus (Bovine)).